The chain runs to 118 residues: Basic phospholipase A2 homolog 1 (118 aa).

Disulfide bonds link Cys11–Cys71, Cys27–Cys117, Cys29–Cys45, Cys44–Cys98, Cys51–Cys91, Cys60–Cys84, and Cys78–Cys89. Residues 106-118 are important for membrane-damaging activities in eukaryotes and bacteria; heparin-binding; the sequence is NKNFNIDTKKRCK.

The protein belongs to the phospholipase A2 family. Group I subfamily. D49 sub-subfamily. Expressed by the venom gland.

It is found in the secreted. The chain is Basic phospholipase A2 homolog 1 from Laticauda colubrina (Yellow-lipped sea krait).